The chain runs to 288 residues: Acetyl-coenzyme A carboxylase carboxyl transferase subunit beta (288 aa).

In terms of domain architecture, CoA carboxyltransferase N-terminal spans Leu34 to Asn288. Zn(2+)-binding residues include Cys38, Cys41, Cys57, and Cys60. A C4-type zinc finger spans residues Cys38–Cys60.

It belongs to the AccD/PCCB family. Acetyl-CoA carboxylase is a heterohexamer composed of biotin carboxyl carrier protein (AccB), biotin carboxylase (AccC) and two subunits each of ACCase subunit alpha (AccA) and ACCase subunit beta (AccD). Requires Zn(2+) as cofactor.

The protein resides in the cytoplasm. The enzyme catalyses N(6)-carboxybiotinyl-L-lysyl-[protein] + acetyl-CoA = N(6)-biotinyl-L-lysyl-[protein] + malonyl-CoA. It participates in lipid metabolism; malonyl-CoA biosynthesis; malonyl-CoA from acetyl-CoA: step 1/1. Its function is as follows. Component of the acetyl coenzyme A carboxylase (ACC) complex. Biotin carboxylase (BC) catalyzes the carboxylation of biotin on its carrier protein (BCCP) and then the CO(2) group is transferred by the transcarboxylase to acetyl-CoA to form malonyl-CoA. This Desulforamulus reducens (strain ATCC BAA-1160 / DSM 100696 / MI-1) (Desulfotomaculum reducens) protein is Acetyl-coenzyme A carboxylase carboxyl transferase subunit beta.